The primary structure comprises 218 residues: Host range factor 1 (218 aa).

Its function is as follows. Facilitates AcMNPV replication in two non-permissive cell lines, IPLB-Ld652Y and IPLB-LdFB. This is Host range factor 1 (HRF-1) from Lepidoptera (butterflies and moths).